The following is a 486-amino-acid chain: UDP-N-acetylmuramate--L-alanine ligase (486 aa).

Gly132–Thr138 contributes to the ATP binding site.

This sequence belongs to the MurCDEF family.

It localises to the cytoplasm. The enzyme catalyses UDP-N-acetyl-alpha-D-muramate + L-alanine + ATP = UDP-N-acetyl-alpha-D-muramoyl-L-alanine + ADP + phosphate + H(+). Its pathway is cell wall biogenesis; peptidoglycan biosynthesis. Its function is as follows. Cell wall formation. This is UDP-N-acetylmuramate--L-alanine ligase from Halorhodospira halophila (strain DSM 244 / SL1) (Ectothiorhodospira halophila (strain DSM 244 / SL1)).